The chain runs to 516 residues: AMP phosphorylase (516 aa).

AMP-binding positions include Gly169, 195-200 (SRAITG), and Thr204. Asp257 acts as the Proton donor in catalysis. AMP-binding residues include Ser265 and Lys289.

This sequence belongs to the thymidine/pyrimidine-nucleoside phosphorylase family. Type 2 subfamily.

The enzyme catalyses AMP + phosphate = alpha-D-ribose 1,5-bisphosphate + adenine. The catalysed reaction is CMP + phosphate = cytosine + alpha-D-ribose 1,5-bisphosphate. It catalyses the reaction UMP + phosphate = alpha-D-ribose 1,5-bisphosphate + uracil. In terms of biological role, catalyzes the conversion of AMP and phosphate to adenine and ribose 1,5-bisphosphate (R15P). Exhibits phosphorylase activity toward CMP and UMP in addition to AMP. Functions in an archaeal AMP degradation pathway, together with R15P isomerase and RubisCO. The protein is AMP phosphorylase of Methanospirillum hungatei JF-1 (strain ATCC 27890 / DSM 864 / NBRC 100397 / JF-1).